The following is a 291-amino-acid chain: Protease HtpX homolog (291 aa).

A run of 2 helical transmembrane segments spans residues 4–24 (VVLFLLTNLAVMLVLSVSARI) and 38–58 (MGMLLVFAALIGFGGSFISLL). H144 is a Zn(2+) binding site. E145 is an active-site residue. H148 provides a ligand contact to Zn(2+). A run of 2 helical transmembrane segments spans residues 152–172 (GDMVTLTLIQGVVNTFVIFLS) and 199–219 (ISSIAFEIMFGILASVVVMCF). E224 is a Zn(2+) binding site.

This sequence belongs to the peptidase M48B family. It depends on Zn(2+) as a cofactor.

The protein localises to the cell inner membrane. This chain is Protease HtpX homolog, found in Chlorobium limicola (strain DSM 245 / NBRC 103803 / 6330).